Reading from the N-terminus, the 120-residue chain is Cytochrome b5 (120 aa).

In terms of domain architecture, Cytochrome b5 heme-binding spans Pro2–Asp78. Residues His37 and His61 each contribute to the heme site. Residues Gly98–Leu118 form a helical membrane-spanning segment.

Belongs to the cytochrome b5 family.

It is found in the endoplasmic reticulum membrane. Its subcellular location is the microsome membrane. Its function is as follows. Membrane bound hemoprotein which function as an electron carrier for several membrane bound oxygenases. It plays a role in fatty-acid desaturation and is also involved in several steps of the sterol biosynthesis pathway, particularly in the 4-demethylation of the 4,4'-dimethyl zymosterol. This chain is Cytochrome b5 (CYB5), found in Saccharomyces cerevisiae (strain ATCC 204508 / S288c) (Baker's yeast).